We begin with the raw amino-acid sequence, 356 residues long: Probable dual-specificity RNA methyltransferase RlmN (356 aa).

E100 (proton acceptor) is an active-site residue. The Radical SAM core domain occupies 106-340; that stretch reads TQQRLTVCLS…VSLRASRGLD (235 aa). C113 and C345 are joined by a disulfide. Residues C120, C124, and C127 each contribute to the [4Fe-4S] cluster site. Residues 167–168, S197, 226–228, and N302 each bind S-adenosyl-L-methionine; these read GE and SLH. C345 (S-methylcysteine intermediate) is an active-site residue.

This sequence belongs to the radical SAM superfamily. RlmN family. [4Fe-4S] cluster serves as cofactor.

It localises to the cytoplasm. The catalysed reaction is adenosine(2503) in 23S rRNA + 2 reduced [2Fe-2S]-[ferredoxin] + 2 S-adenosyl-L-methionine = 2-methyladenosine(2503) in 23S rRNA + 5'-deoxyadenosine + L-methionine + 2 oxidized [2Fe-2S]-[ferredoxin] + S-adenosyl-L-homocysteine. The enzyme catalyses adenosine(37) in tRNA + 2 reduced [2Fe-2S]-[ferredoxin] + 2 S-adenosyl-L-methionine = 2-methyladenosine(37) in tRNA + 5'-deoxyadenosine + L-methionine + 2 oxidized [2Fe-2S]-[ferredoxin] + S-adenosyl-L-homocysteine. Functionally, specifically methylates position 2 of adenine 2503 in 23S rRNA and position 2 of adenine 37 in tRNAs. The protein is Probable dual-specificity RNA methyltransferase RlmN of Prochlorococcus marinus (strain MIT 9303).